The chain runs to 360 residues: Peptide chain release factor 1 (360 aa).

An N5-methylglutamine modification is found at Gln-235.

Belongs to the prokaryotic/mitochondrial release factor family. In terms of processing, methylated by PrmC. Methylation increases the termination efficiency of RF1.

The protein localises to the cytoplasm. Functionally, peptide chain release factor 1 directs the termination of translation in response to the peptide chain termination codons UAG and UAA. This is Peptide chain release factor 1 from Burkholderia ambifaria (strain MC40-6).